We begin with the raw amino-acid sequence, 101 residues long: Small ribosomal subunit protein uS14 (101 aa).

It belongs to the universal ribosomal protein uS14 family. In terms of assembly, part of the 30S ribosomal subunit. Contacts proteins S3 and S10.

Functionally, binds 16S rRNA, required for the assembly of 30S particles and may also be responsible for determining the conformation of the 16S rRNA at the A site. The protein is Small ribosomal subunit protein uS14 of Polaromonas naphthalenivorans (strain CJ2).